The sequence spans 635 residues: DNA primase (635 aa).

The segment at 41-65 adopts a CHC2-type zinc-finger fold; that stretch reads CPFHDEKSPSFSVSPAKQMYYCFGC. The 84-residue stretch at 265–348 folds into the Toprim domain; sequence DEAILVEGYF…SGQVNLRILN (84 aa). The Mg(2+) site is built by glutamate 271, aspartate 317, and aspartate 319.

Belongs to the DnaG primase family. In terms of assembly, monomer. Interacts with DnaB. Zn(2+) is required as a cofactor. Requires Mg(2+) as cofactor.

It catalyses the reaction ssDNA + n NTP = ssDNA/pppN(pN)n-1 hybrid + (n-1) diphosphate.. RNA polymerase that catalyzes the synthesis of short RNA molecules used as primers for DNA polymerase during DNA replication. The sequence is that of DNA primase from Synechocystis sp. (strain ATCC 27184 / PCC 6803 / Kazusa).